The following is a 298-amino-acid chain: MRGLDYKWIEALDAVVAQGGFERAAEELYISQSAVSQRIKQLERFLAQPVLIREQPPKPTPVGKKLLGLYRRVRILEHELIPELMNDDTAKPIQLALATNADSLATWLLPALKEVMTLRQVELNLAIYGESRSIEKLKSGEVAGAISLESQPIAGCKADYLGRMDYVCVASPDFYQRYFAAGVNYQTLRKAPAVSYDQYDDLHNRFLHDHFNISRDSIINHNVGSSEAFVRLAVSGIAYCLIPKLQIEQELASGVLMDITPGFLLSYRIYWHHWQLESGVLKEISQAIVQYAQAHLPQ.

In terms of domain architecture, HTH lysR-type spans 4-60 (LDYKWIEALDAVVAQGGFERAAEELYISQSAVSQRIKQLERFLAQPVLIREQPPKPT). The H-T-H motif DNA-binding region spans 21–40 (FERAAEELYISQSAVSQRIK).

Belongs to the LysR transcriptional regulatory family. As to quaternary structure, homodimer.

In terms of biological role, controls the transcription of genes involved in arginine and lysine metabolism. The chain is HTH-type transcriptional regulator ArgP from Vibrio vulnificus (strain CMCP6).